The chain runs to 63 residues: Ferredoxin (63 aa).

Positions 3-31 (WKVSVDVDTCIGDAICASLCPDVFEMGDD) constitute a 4Fe-4S ferredoxin-type domain. The [4Fe-4S] cluster site is built by Cys12, Asp15, and Cys18. The cysteines at positions 22 and 45 are disulfide-linked. [4Fe-4S] cluster is bound at residue Cys53.

The cofactor is [4Fe-4S] cluster. [3Fe-4S] cluster is required as a cofactor.

Its function is as follows. Ferredoxins are iron-sulfur proteins that transfer electrons in a wide variety of metabolic reactions. This chain is Ferredoxin (fdxA), found in Thermococcus kodakarensis (strain ATCC BAA-918 / JCM 12380 / KOD1) (Pyrococcus kodakaraensis (strain KOD1)).